A 421-amino-acid chain; its full sequence is Enolase (421 aa).

Position 162 (glutamine 162) interacts with (2R)-2-phosphoglycerate. Glutamate 204 (proton donor) is an active-site residue. Mg(2+) contacts are provided by aspartate 241, glutamate 284, and aspartate 311. (2R)-2-phosphoglycerate is bound by residues lysine 336, arginine 365, serine 366, and lysine 387. The active-site Proton acceptor is lysine 336.

This sequence belongs to the enolase family. Mg(2+) serves as cofactor.

The protein resides in the cytoplasm. The protein localises to the secreted. It is found in the cell surface. It catalyses the reaction (2R)-2-phosphoglycerate = phosphoenolpyruvate + H2O. It participates in carbohydrate degradation; glycolysis; pyruvate from D-glyceraldehyde 3-phosphate: step 4/5. Its function is as follows. Catalyzes the reversible conversion of 2-phosphoglycerate (2-PG) into phosphoenolpyruvate (PEP). It is essential for the degradation of carbohydrates via glycolysis. In Nautilia profundicola (strain ATCC BAA-1463 / DSM 18972 / AmH), this protein is Enolase.